The primary structure comprises 440 residues: Ribosomal protein uS12 methylthiotransferase RimO (440 aa).

The region spanning 5–116 (PTIAISHLGC…IVSVIERAEQ (112 aa)) is the MTTase N-terminal domain. Cysteine 14, cysteine 50, cysteine 79, cysteine 154, cysteine 158, and cysteine 161 together coordinate [4Fe-4S] cluster. Residues 140-370 (TTTEGVAYLR…ALQQPISWRK (231 aa)) form the Radical SAM core domain. Positions 372-438 (QQEVGKTVEV…EYDLFGQVVS (67 aa)) constitute a TRAM domain.

The protein belongs to the methylthiotransferase family. RimO subfamily. Requires [4Fe-4S] cluster as cofactor.

Its subcellular location is the cytoplasm. It carries out the reaction L-aspartate(89)-[ribosomal protein uS12]-hydrogen + (sulfur carrier)-SH + AH2 + 2 S-adenosyl-L-methionine = 3-methylsulfanyl-L-aspartate(89)-[ribosomal protein uS12]-hydrogen + (sulfur carrier)-H + 5'-deoxyadenosine + L-methionine + A + S-adenosyl-L-homocysteine + 2 H(+). Catalyzes the methylthiolation of an aspartic acid residue of ribosomal protein uS12. This chain is Ribosomal protein uS12 methylthiotransferase RimO, found in Nostoc sp. (strain PCC 7120 / SAG 25.82 / UTEX 2576).